Here is a 164-residue protein sequence, read N- to C-terminus: Ribosome maturation factor RimM (164 aa).

In terms of domain architecture, PRC barrel spans 90–161 (KGSYFIADLI…TVTIKPLEIW (72 aa)).

Belongs to the RimM family. Binds ribosomal protein uS19.

It is found in the cytoplasm. Its function is as follows. An accessory protein needed during the final step in the assembly of 30S ribosomal subunit, possibly for assembly of the head region. Essential for efficient processing of 16S rRNA. May be needed both before and after RbfA during the maturation of 16S rRNA. It has affinity for free ribosomal 30S subunits but not for 70S ribosomes. The protein is Ribosome maturation factor RimM of Clostridium botulinum (strain Langeland / NCTC 10281 / Type F).